A 195-amino-acid polypeptide reads, in one-letter code: Imidazoleglycerol-phosphate dehydratase (195 aa).

This sequence belongs to the imidazoleglycerol-phosphate dehydratase family.

It is found in the cytoplasm. It catalyses the reaction D-erythro-1-(imidazol-4-yl)glycerol 3-phosphate = 3-(imidazol-4-yl)-2-oxopropyl phosphate + H2O. The protein operates within amino-acid biosynthesis; L-histidine biosynthesis; L-histidine from 5-phospho-alpha-D-ribose 1-diphosphate: step 6/9. The protein is Imidazoleglycerol-phosphate dehydratase of Paraburkholderia phymatum (strain DSM 17167 / CIP 108236 / LMG 21445 / STM815) (Burkholderia phymatum).